The primary structure comprises 152 residues: Transcriptional regulator MraZ (152 aa).

2 consecutive SpoVT-AbrB domains span residues Ala5–Glu52 and Ala81–Thr124.

This sequence belongs to the MraZ family. As to quaternary structure, forms oligomers.

The protein resides in the cytoplasm. The protein localises to the nucleoid. Negatively regulates its own expression and that of the subsequent genes in the proximal part of the division and cell wall (dcw) gene cluster. Acts by binding directly to DNA. May also regulate the expression of genes outside the dcw cluster. In Pectobacterium atrosepticum (strain SCRI 1043 / ATCC BAA-672) (Erwinia carotovora subsp. atroseptica), this protein is Transcriptional regulator MraZ.